Reading from the N-terminus, the 508-residue chain is MTEPTQPQAAVAADENQIVAERRDKLRALRDQGIAYPNDFQPTHHAAGLQTEYADADKEALDAKALDVAVAGRMMLKRVMGKASFATVQDGSGQIQFFVTPADVGAETYDAFKKWDLGDIVAARGVLFRTNKGELSVKCTELRLLAKALRPLPDKFHGLADQETRYRQRYVDLIVTPETRATFRARTKAIASIRKFMSDADFMEVETPMLHPIPGGAAAKPFVTHHNALDMQMFLRIAPELYLKRLIVGGFERVFEINRNFRNEGVSPRHNPEFTMMEFYAAYTDYRWLMDFTERLIRQAAVDALGTATIRYQGRELDLAKPFHRLTITQAIQKYAPNYTDGQLSDDAFLRGELKRLGVDVTQPAFLNAGIGALQLALFEETAEAQLWEPTFIVDYPIEVSPLARESDTVAGITERFELFVTGREIANGFSELNDPEDQAARFRKQVEQKDAGDEEAMFFDADYIRALEYGMPPTGGCGIGIDRLVMLLTDSPTIRDVLLFPHLRRED.

Mg(2+) contacts are provided by Glu-418 and Glu-425.

It belongs to the class-II aminoacyl-tRNA synthetase family. Homodimer. Requires Mg(2+) as cofactor.

Its subcellular location is the cytoplasm. The catalysed reaction is tRNA(Lys) + L-lysine + ATP = L-lysyl-tRNA(Lys) + AMP + diphosphate. The chain is Lysine--tRNA ligase from Burkholderia pseudomallei (strain 668).